The following is a 509-amino-acid chain: Dihydrolipoyl dehydrogenase, mitochondrial (509 aa).

A mitochondrion-targeting transit peptide spans 1 to 35 (MQSWSRVYCSLAKRGHFNRISHGLQGLSAVPLRTY). K66 carries the N6-acetyllysine; alternate modification. K66 is modified (N6-succinyllysine; alternate). FAD-binding positions include 71–80 (EKNETLGGTC) and K89. An intrachain disulfide couples C80 to C85. K104, K122, K132, and K143 each carry N6-acetyllysine; alternate. 4 positions are modified to N6-succinyllysine; alternate: K104, K122, K132, and K143. An FAD-binding site is contributed by G154. N6-succinyllysine is present on residues K159 and K166. 183–185 (TGS) is an FAD binding site. NAD(+) is bound by residues 220 to 227 (GAGVIGVE) and E243. An N6-succinyllysine mark is found at K273 and K277. V278 contacts NAD(+). Phosphoserine is present on residues S285 and S297. G314 contributes to the NAD(+) binding site. K346 is subject to N6-acetyllysine. FAD is bound by residues D355 and 361-364 (MLAH). K410 is subject to N6-acetyllysine; alternate. Position 410 is an N6-succinyllysine; alternate (K410). An N6-acetyllysine mark is found at K417 and K420. K430 is subject to N6-succinyllysine. The active-site Proton acceptor is H487. Phosphoserine is present on S502. K505 is subject to N6-acetyllysine; alternate. K505 carries the N6-succinyllysine; alternate modification.

It belongs to the class-I pyridine nucleotide-disulfide oxidoreductase family. Homodimer. Part of the multimeric pyruvate dehydrogenase complex that contains multiple copies of pyruvate dehydrogenase (subunits PDHA (PDHA1 or PDHA2) and PDHB, E1), dihydrolipoamide acetyltransferase (DLAT, E2) and lipoamide dehydrogenase (DLD, E3). These subunits are bound to an inner core composed of about 48 DLAT and 12 PDHX molecules (by non covalent bonds). The 2-oxoglutarate dehydrogenase complex is composed of OGDH (2-oxoglutarate dehydrogenase; E1), DLST (dihydrolipoamide succinyltransferase; E2), DLD (dihydrolipoamide dehydrogenase; E3) and the assembly factor KGD4. It contains multiple copies of the three enzymatic components (E1, E2 and E3). In the nucleus, the 2-oxoglutarate dehydrogenase complex associates with KAT2A. Interacts with PDHX. FAD is required as a cofactor. In terms of processing, tyrosine phosphorylated.

The protein resides in the mitochondrion matrix. It localises to the nucleus. The protein localises to the cell projection. It is found in the cilium. Its subcellular location is the flagellum. The protein resides in the cytoplasmic vesicle. It localises to the secretory vesicle. The protein localises to the acrosome. The enzyme catalyses N(6)-[(R)-dihydrolipoyl]-L-lysyl-[protein] + NAD(+) = N(6)-[(R)-lipoyl]-L-lysyl-[protein] + NADH + H(+). With respect to regulation, disruption of native heterodimer state inhibits primary dihydrolipoamide dehydrogenase activity and induces serine protease activity. Lipoamide dehydrogenase is a component of the glycine cleavage system as well as an E3 component of three alpha-ketoacid dehydrogenase complexes (pyruvate-, alpha-ketoglutarate-, and branched-chain amino acid-dehydrogenase complex). The 2-oxoglutarate dehydrogenase complex is mainly active in the mitochondrion. A fraction of the 2-oxoglutarate dehydrogenase complex also localizes in the nucleus and is required for lysine succinylation of histones: associates with KAT2A on chromatin and provides succinyl-CoA to histone succinyltransferase KAT2A. In monomeric form may have additional moonlighting function as serine protease. Involved in the hyperactivation of spermatazoa during capacitation and in the spermatazoal acrosome reaction. The sequence is that of Dihydrolipoyl dehydrogenase, mitochondrial (DLD) from Homo sapiens (Human).